A 556-amino-acid polypeptide reads, in one-letter code: ATP synthase subunit alpha 2 (556 aa).

177–184 is a binding site for ATP; the sequence is GDRATGKT. The segment at 514-556 is disordered; sequence GGHAEDAADDMGGALDGEHASGDATSIAPTPPGGAEAGAPRKR. Low complexity predominate over residues 546–556; sequence GGAEAGAPRKR.

Belongs to the ATPase alpha/beta chains family. F-type ATPases have 2 components, CF(1) - the catalytic core - and CF(0) - the membrane proton channel. CF(1) has five subunits: alpha(3), beta(3), gamma(1), delta(1), epsilon(1). CF(0) has three main subunits: a(1), b(2) and c(9-12). The alpha and beta chains form an alternating ring which encloses part of the gamma chain. CF(1) is attached to CF(0) by a central stalk formed by the gamma and epsilon chains, while a peripheral stalk is formed by the delta and b chains.

It is found in the cell inner membrane. The catalysed reaction is ATP + H2O + 4 H(+)(in) = ADP + phosphate + 5 H(+)(out). Functionally, produces ATP from ADP in the presence of a proton gradient across the membrane. The alpha chain is a regulatory subunit. This chain is ATP synthase subunit alpha 2, found in Burkholderia thailandensis (strain ATCC 700388 / DSM 13276 / CCUG 48851 / CIP 106301 / E264).